The sequence spans 437 residues: Beta-1,3-galactosyl-O-glycosyl-glycoprotein beta-1,6-N-acetylglucosaminyltransferase 3 (437 aa).

Residues 1–6 (MVSWRR) are Cytoplasmic-facing. Residues 7-27 (FCWHYHGWTLGCYMLLAIIAL) form a helical; Signal-anchor for type II membrane protein membrane-spanning segment. Over 28 to 437 (KLSLRLKCDF…RHKAIYGTEL (410 aa)) the chain is Lumenal. Intrachain disulfides connect C70–C227, C161–C381, C182–C209, and C390–C422. N288 is a glycosylation site (N-linked (GlcNAc...) asparagine).

It belongs to the glycosyltransferase 14 family. Post-translationally, N-glycosylated.

The protein resides in the golgi apparatus membrane. The catalysed reaction is a 3-O-[beta-D-galactosyl-(1-&gt;3)-N-acetyl-alpha-D-galactosaminyl]-L-seryl-[protein] + UDP-N-acetyl-alpha-D-glucosamine = 3-O-{beta-D-galactosyl-(1-&gt;3)-[N-acetyl-beta-D-glucosaminyl-(1-&gt;6)]-N-acetyl-alpha-D-galactosaminyl}-L-seryl-[protein] + UDP + H(+). It carries out the reaction a 3-O-[beta-D-galactosyl-(1-&gt;3)-N-acetyl-alpha-D-galactosaminyl]-L-threonyl-[protein] + UDP-N-acetyl-alpha-D-glucosamine = a 3-O-{beta-D-galactosyl-(1-&gt;3)-[N-acetyl-beta-D-glucosaminyl-(1-&gt;6)]-N-acetyl-alpha-D-galactosaminyl}-L-threonyl-[protein] + UDP + H(+). The enzyme catalyses a beta-D-Gal-(1-&gt;4)-beta-D-GlcNAc-(1-&gt;3)-beta-D-Gal-(1-&gt;4)-beta-D-GlcNAc derivative + UDP-N-acetyl-alpha-D-glucosamine = a beta-D-Gal-(1-&gt;4)-beta-D-GlcNAc-(1-&gt;3)-[beta-D-GlcNAc-(1-&gt;6)]-beta-D-Gal-(1-&gt;4)-N-acetyl-beta-D-glucosaminyl derivative + UDP + H(+). It catalyses the reaction 3-O-[N-acetyl-beta-D-glucosaminyl-(1-&gt;3)-N-acetyl-alpha-D-galactosaminyl]-L-seryl-[protein] + UDP-N-acetyl-alpha-D-glucosamine = 3-O-[N-acetyl-beta-D-glucosaminyl-(1-&gt;3)-[N-acetyl-beta-D-glucosaminyl-(1-&gt;6)]-N-acetyl-alpha-D-galactosaminyl]-L-seryl-[protein] + UDP + H(+). The catalysed reaction is a 3-O-[N-acetyl-beta-D-glucosaminyl-(1-&gt;3)-N-acetyl-alpha-D-galactosaminyl]-L-threonyl-[protein] + UDP-N-acetyl-alpha-D-glucosamine = 3-O-[N-acetyl-beta-D-glucosaminyl-(1-&gt;3)-[N-acetyl-beta-D-glucosaminyl-(1-&gt;6)]-N-acetyl-alpha-D-galactosaminyl]-L-threonyl-[protein] + UDP + H(+). It functions in the pathway protein modification; protein glycosylation. Its function is as follows. Glycosyltransferase that can synthesize all known mucin beta 6 N-acetylglucosaminides. Mediates core 2 and core 4 O-glycan branching, 2 important steps in mucin-type biosynthesis. Also has I-branching enzyme activity by converting linear into branched poly-N-acetyllactosaminoglycans, leading to introduce the blood group I antigen during embryonic development. The chain is Beta-1,3-galactosyl-O-glycosyl-glycoprotein beta-1,6-N-acetylglucosaminyltransferase 3 (Gcnt3) from Rattus norvegicus (Rat).